The following is a 697-amino-acid chain: Serine/threonine-protein kinase tousled-like 2 (697 aa).

Disordered regions lie at residues 25–159 (VAKG…SQSE) and 288–316 (KLLIKKKPPSASQTPPPNLEPNKRKSKSN). Over residues 31–44 (HNESSNQSLCSVGS) the composition is skewed to polar residues. The span at 46-61 (SDKELETPEKKSNDQR) shows a compositional bias: basic and acidic residues. A compositionally biased stretch (polar residues) spans 109-145 (SSPQHSLSNPPAAVQQGSPSSISSVNTDHSHTSTSHK). Coiled-coil stretches lie at residues 265–294 (AFQNLVKQQERVNGQREEIERQRKLLIKKK) and 336–373 (KLRLGHLKKEEAEIQVELERLERVRNLHIRELKRIHNE). Residues 388 to 666 (YLLLHLLGRG…VHQLASDPYL (279 aa)) form the Protein kinase domain. ATP is bound by residues 394 to 402 (LGRGGFSEV) and Lys-417. Asp-518 (proton acceptor) is an active-site residue.

It belongs to the protein kinase superfamily. Ser/Thr protein kinase family. In terms of assembly, monomer. May form homodimers; homodimerization may enhance autophosphoylation and enzymatic activity. Heterodimer with TLK1. Requires Mg(2+) as cofactor. Post-translationally, phosphorylated. Autophosphorylated; phosphorylation promotes the assembly of higher order oligomers and enzymatic activity.

The protein localises to the nucleus. It is found in the nucleoplasm. The protein resides in the cytoplasm. It localises to the perinuclear region. Its subcellular location is the cytoskeleton. The catalysed reaction is L-seryl-[protein] + ATP = O-phospho-L-seryl-[protein] + ADP + H(+). It carries out the reaction L-threonyl-[protein] + ATP = O-phospho-L-threonyl-[protein] + ADP + H(+). In terms of biological role, serine/threonine-protein kinase involved in the process of chromatin assembly and probably also DNA replication, transcription, repair, and chromosome segregation. Negative regulator of amino acid starvation-induced autophagy. In Danio rerio (Zebrafish), this protein is Serine/threonine-protein kinase tousled-like 2.